A 1203-amino-acid polypeptide reads, in one-letter code: Zinc finger and BTB domain-containing protein 38 (1203 aa).

Residues 33-100 (CDVTIIVEDT…IYSSTVVVRR (68 aa)) form the BTB domain. A Glycyl lysine isopeptide (Lys-Gly) (interchain with G-Cter in SUMO2) cross-link involves residue K43. S130 bears the Phosphoserine mark. Residues K145, K148, K151, and K260 each participate in a glycyl lysine isopeptide (Lys-Gly) (interchain with G-Cter in SUMO2) cross-link. The interval 230–334 (EAYRSQPLRE…PSETPGPPAA (105 aa)) is disordered. The segment covering 269–280 (TQTQDSDSTTEN) has biased composition (polar residues). The tract at residues 299–522 (PAPILSHSEP…RRYQCIFCLE (224 aa)) is interaction with CBFA2T3. The segment covering 313 to 322 (GDVHFPREDE) has biased composition (basic and acidic residues). A C2H2-type 1 zinc finger spans residues 341-363 (YNCSCCSKSFDSSTLLGAHMQLH). The C2H2-type 2; degenerate zinc finger occupies 370–394 (FVCKYCNKQFTTLNRLDRHEQICMR). C2H2-type zinc fingers lie at residues 459–481 (YSCV…ANVH), 487–509 (YPCH…EIWH), and 515–538 (YQCI…KSFH). Glycyl lysine isopeptide (Lys-Gly) (interchain with G-Cter in SUMO2) cross-links involve residues K549 and K556. Polar residues-rich tracts occupy residues 581–598 (RNSS…NESP), 607–628 (LPSS…TSSP), 635–644 (PSWQGTPTSA), and 731–741 (SNHQSPSQPVA). Disordered stretches follow at residues 581 to 644 (RNSS…PTSA) and 731 to 776 (SNHQ…VPCN). Basic and acidic residues predominate over residues 747-757 (KDSKPEADKAS). Residues K750, K755, K796, K806, K813, K834, K842, and K849 each participate in a glycyl lysine isopeptide (Lys-Gly) (interchain with G-Cter in SUMO2) cross-link. Disordered regions lie at residues 857-882 (KPKY…SPLG) and 895-914 (FDEV…YYNY). Positions 866–877 (TLPRESDPETRG) are enriched in basic and acidic residues. Glycyl lysine isopeptide (Lys-Gly) (interchain with G-Cter in SUMO2) cross-links involve residues K915, K971, K976, K984, K988, K998, K1024, and K1033. 5 consecutive C2H2-type zinc fingers follow at residues 1017-1039 (YICE…MRCH), 1045-1067 (YQCK…ERIH), 1073-1095 (FICQ…ERIH), 1101-1123 (YHCQ…ERRH), and 1132-1154 (FACF…QKKH). Residues K1116, K1139, K1142, K1157, and K1190 each participate in a glycyl lysine isopeptide (Lys-Gly) (interchain with G-Cter in SUMO2) cross-link. The segment at 1172–1203 (NSDLLESQPCTDSEDSDQKDDIKKPLLKMSFE) is disordered.

In terms of assembly, interacts with CBFA2T3, ZBTB4 and RBBP6. In terms of processing, ubiquitinated by RBBP6; leading to its degradation by the proteasome. As to expression, widely expressed throughout the adult brain where it is found mainly in neurons. Also expressed in the adrenal medulla. Not detected in non-neural tissues including heart, spleen, liver and muscle. In the embryo, expressed in the developing brain and spinal cord but not in the migratory neural crest. Also expressed in the limbs, transiently in somites, and in the embryonic liver. In the embryonic neural tube, expression is restricted to late postmitotic neurons.

The protein resides in the nucleus. It is found in the chromosome. Its function is as follows. Transcriptional regulator with bimodal DNA-binding specificity. Binds with a higher affinity to methylated CpG dinucleotides in the consensus sequence 5'-CGCG-3' but can also bind to E-box elements (5'-CACGTG-3'). Can also bind specifically to a single methyl-CpG pair. Represses transcription in a methyl-CpG-dependent manner. Plays an important role in regulating DNA-replication and common fragile sites (CFS) stability in a RBBP6- and MCM10-dependent manner; represses expression of MCM10 which plays an important role in DNA-replication. Acts as a transcriptional activator. May be involved in the differentiation and/or survival of late postmitotic neurons. This Rattus norvegicus (Rat) protein is Zinc finger and BTB domain-containing protein 38.